Reading from the N-terminus, the 61-residue chain is Small ribosomal subunit protein uS14 (61 aa).

Residues Cys-24, Cys-27, Cys-40, and Cys-43 each coordinate Zn(2+).

It belongs to the universal ribosomal protein uS14 family. Zinc-binding uS14 subfamily. In terms of assembly, part of the 30S ribosomal subunit. Contacts proteins S3 and S10. It depends on Zn(2+) as a cofactor.

Its function is as follows. Binds 16S rRNA, required for the assembly of 30S particles and may also be responsible for determining the conformation of the 16S rRNA at the A site. The chain is Small ribosomal subunit protein uS14 from Rhodopirellula baltica (strain DSM 10527 / NCIMB 13988 / SH1).